Consider the following 120-residue polypeptide: MSRVKSGKVTHARHRKVIKQAKGYYAARSTNFRTATQAVDKANQYATRDRKARKRNFRALWIQRINAAVRLFDIEMTYSRFINGLSKAGIEVDRKVLADLAVHEPEAFNAIAAQAKAALA.

Belongs to the bacterial ribosomal protein bL20 family.

Binds directly to 23S ribosomal RNA and is necessary for the in vitro assembly process of the 50S ribosomal subunit. It is not involved in the protein synthesizing functions of that subunit. The polypeptide is Large ribosomal subunit protein bL20 (Cereibacter sphaeroides (strain ATCC 17029 / ATH 2.4.9) (Rhodobacter sphaeroides)).